The primary structure comprises 642 residues: Fork head protein homolog 2 (642 aa).

The tract at residues 1-23 (MTVRRLESKSEHISDDEERKEQL) is disordered. One can recognise an FHA domain in the interval 96 to 160 (IILGREPANP…NGIKVDGKLF (65 aa)). Residues 223–318 (KPPYSYSVMI…AKTRKTPRKR (96 aa)) constitute a DNA-binding region (fork-head). The span at 310–319 (KTRKTPRKRS) shows a compositional bias: basic residues. Disordered stretches follow at residues 310–392 (KTRK…ETYK), 519–574 (VSDS…TEEN), and 586–642 (ATME…KSSA). 5 positions are modified to phosphoserine: Ser319, Ser321, Ser322, Ser334, and Ser336. Residues 348–362 (TSIPAAEPASSTTSA) are compositionally biased toward low complexity. Composition is skewed to polar residues over residues 363-381 (RDQT…TAET), 519-552 (VSDS…SANK), and 599-642 (TPTS…KSSA). Residues Ser375, Ser535, and Ser626 each carry the phosphoserine modification.

Phosphorylated. Occurs periodically during mitosis.

The protein localises to the nucleus. Functionally, required for promoter sequence element PCB-driven, M-phase-specific transcription. Acts as a transcriptional activator with a role in the regulation of mitosis. Binds, cooperatively with mcm1, the CLB cluster regulatory elements throughout the cell cycle. Regulates the periodic transcription of cdc15 and spo12. Required for the correct timing, positioning and contraction of the division septum. The chain is Fork head protein homolog 2 (fkh2) from Schizosaccharomyces pombe (strain 972 / ATCC 24843) (Fission yeast).